Here is a 233-residue protein sequence, read N- to C-terminus: Orotidine 5'-phosphate decarboxylase (233 aa).

Residues D12, K34, 61 to 70, T120, R181, Q190, G210, and R211 contribute to the substrate site; that span reads DLKFHDIPNT. The Proton donor role is filled by K63.

The protein belongs to the OMP decarboxylase family. Type 1 subfamily. As to quaternary structure, homodimer.

It catalyses the reaction orotidine 5'-phosphate + H(+) = UMP + CO2. Its pathway is pyrimidine metabolism; UMP biosynthesis via de novo pathway; UMP from orotate: step 2/2. Catalyzes the decarboxylation of orotidine 5'-monophosphate (OMP) to uridine 5'-monophosphate (UMP). This is Orotidine 5'-phosphate decarboxylase from Hahella chejuensis (strain KCTC 2396).